Here is a 55-residue protein sequence, read N- to C-terminus: Male-specific sperm protein Mst84Dc (55 aa).

The protein belongs to the MST(3)CGP family. In terms of tissue distribution, testis.

The protein is Male-specific sperm protein Mst84Dc (Mst84Dc) of Drosophila melanogaster (Fruit fly).